The sequence spans 680 residues: Tumor protein 63 (680 aa).

Residues 1–107 are transcription activation; it reads MNFETSRCAT…MQDSDLSDPM (107 aa). A compositionally biased stretch (polar residues) spans 123 to 157; it reads QIQNGSSSTSPYNTDHAQNSVTAPSPYAQPSSTFD. The segment at 123 to 171 is disordered; the sequence is QIQNGSSSTSPYNTDHAQNSVTAPSPYAQPSSTFDALSPSPAIPSNTDY. Residues 170–362 mediate DNA binding; it reads DYPGPHSFDV…KADEDSIRKQ (193 aa). C244, H247, C308, and C312 together coordinate Zn(2+). Residues 351 to 360 are compositionally biased toward basic and acidic residues; sequence DRKADEDSIR. Disordered regions lie at residues 351–393 and 436–472; these read DRKA…IKKR and RQQQ…MNSM. The segment at 352 to 388 is interaction with HIPK2; the sequence is RKADEDSIRKQQVSDSAKNGDGTKRPFRQNTHGIQMT. A compositionally biased stretch (polar residues) spans 379–389; the sequence is RQNTHGIQMTS. The tract at residues 394–443 is oligomerization; sequence RSPDDELLYLPVRGRETYEMLLKIKESLELMQYLPQHTIETYRQQQQQQH. Low complexity predominate over residues 437-463; that stretch reads QQQQQQHQHLLQKQTSMQSQSSYGNSS. The SAM domain maps to 541–607; that stretch reads PPYPTDCSIV…WKGILDHRQL (67 aa). Positions 610-680 are transactivation inhibition; sequence FSSPPHLLRT…KQQRIKEEGE (71 aa). K676 participates in a covalent cross-link: Glycyl lysine isopeptide (Lys-Gly) (interchain with G-Cter in SUMO).

Belongs to the p53 family. As to quaternary structure, binds DNA as a homotetramer. Isoform composition of the tetramer may determine transactivation activity. Interacts with HIPK2. Interacts with SSRP1, leading to stimulate coactivator activity. Interacts with PDS5A. Interacts (via activation domain) with NOC2L. Interacts with WWP1. Requires Zn(2+) as cofactor. Post-translationally, may be sumoylated. In terms of processing, ubiquitinated. Polyubiquitination involves WWP1 and leads to proteasomal degradation of this protein. Widely expressed, notably in thymus, prostate, placenta and skeletal muscle, although the precise isoform varies according to tissue type. Progenitor cell layers of skin, breast and prostate express high levels of DeltaN-type isoforms.

It is found in the nucleus. In terms of biological role, acts as a sequence specific DNA binding transcriptional activator or repressor. The isoforms contain a varying set of transactivation and auto-regulating transactivation inhibiting domains thus showing an isoform specific activity. May be required in conjunction with TP73/p73 for initiation of p53/TP53 dependent apoptosis in response to genotoxic insults and the presence of activated oncogenes. Involved in Notch signaling by probably inducing JAG1 and JAG2. Activates transcription of the p21 promoter. Activates RIPK4 transcription. Plays a role in the regulation of epithelial morphogenesis. The ratio of DeltaN-type and TA*-type isoforms may govern the maintenance of epithelial stem cell compartments and regulate the initiation of epithelial stratification from the undifferentiated embryonal ectoderm. Required for limb formation from the apical ectodermal ridge. The sequence is that of Tumor protein 63 (Tp63) from Mus musculus (Mouse).